The following is a 191-amino-acid chain: MTHELISLPYAVDALAPVISKETVEFHHGKHLKTYVDNLNKLIIGTEFENADLNTIVQKSEGGIFNNAGQTLNHNLYFTQFRPGKGGAPKGKLGEAIDKQFGSFEKFKEEFNTAGTTLFGSGWVWLASDANGKLSIEKEPNAGNPVRKGLNPLLGFDVWEHAYYLTYQNRRADHLKDLWSIVDWDIVESRY.

The Fe(3+) site is built by His-27, His-74, Asp-157, and His-161. The Mn(2+) site is built by His-27, His-74, Asp-157, and His-161.

Belongs to the iron/manganese superoxide dismutase family. As to quaternary structure, homodimer. Mn(2+) serves as cofactor. The cofactor is Fe(3+).

It carries out the reaction 2 superoxide + 2 H(+) = H2O2 + O2. With respect to regulation, inhibited by hydrogen peroxide. Functionally, destroys superoxide anion radicals which are normally produced within the cells and which are toxic to biological systems. Catalyzes the dismutation of superoxide anion radicals into O2 and H2O2 by successive reduction and oxidation of the transition metal ion at the active site. The chain is Superoxide dismutase [Mn/Fe] (sodB) from Porphyromonas gingivalis (strain ATCC BAA-308 / W83).